Here is a 280-residue protein sequence, read N- to C-terminus: MVVKVGIAKLGNIASGVMAELLLDERADREDMQTFMATSGTKLQPEDIDRVVTNMKAWGPDFCIVVSPNGVLPGPKGAREALAAAGIPCVVITDDITTKKEEWEALKASEFGYVIMKGDSMIGARREFLDPIEMADYNGNLIKVLSITGAFRKLQVALDEVIDQVKAGKKGKDLALPKLVMTSDKAVEGEFSNPYAYAKARAAYEIAQAVAGVNVKGCFMTKGFENYTPIVASAHEMMRQAMLLCEEAREMEKATDAVIRKPHKNDGTRVAKKTLISKPE.

It belongs to the MTD family.

It carries out the reaction 5,10-methylenetetrahydromethanopterin + oxidized coenzyme F420-(gamma-L-Glu)(n) + 2 H(+) = 5,10-methenyl-5,6,7,8-tetrahydromethanopterin + reduced coenzyme F420-(gamma-L-Glu)(n). Its pathway is one-carbon metabolism; methanogenesis from CO(2); 5,10-methylene-5,6,7,8-tetrahydromethanopterin from 5,10-methenyl-5,6,7,8-tetrahydromethanopterin (coenzyme F420 route): step 1/1. Functionally, catalyzes the reversible reduction of methenyl-H(4)MPT(+) to methylene-H(4)MPT. The sequence is that of F420-dependent methylenetetrahydromethanopterin dehydrogenase from Methanospirillum hungatei JF-1 (strain ATCC 27890 / DSM 864 / NBRC 100397 / JF-1).